The chain runs to 270 residues: S-methyl-5'-thioadenosine phosphorylase (270 aa).

Phosphate contacts are provided by residues Ser16, 58-59 (RH), and 91-92 (SA). Cystine bridges form between Cys138-Cys205, Cys200-Cys262, and Cys259-Cys261. Met190 lines the substrate pocket. Residue Thr191 coordinates phosphate. 214-216 (DYD) serves as a coordination point for substrate.

It belongs to the PNP/MTAP phosphorylase family. MTAP subfamily. In terms of assembly, homohexamer. Dimer of a homotrimer.

The enzyme catalyses S-methyl-5'-thioadenosine + phosphate = 5-(methylsulfanyl)-alpha-D-ribose 1-phosphate + adenine. The protein operates within amino-acid biosynthesis; L-methionine biosynthesis via salvage pathway; S-methyl-5-thio-alpha-D-ribose 1-phosphate from S-methyl-5'-thioadenosine (phosphorylase route): step 1/1. Its function is as follows. Catalyzes the reversible phosphorylation of S-methyl-5'-thioadenosine (MTA) to adenine and 5-methylthioribose-1-phosphate. Involved in the breakdown of MTA, a major by-product of polyamine biosynthesis. Responsible for the first step in the methionine salvage pathway after MTA has been generated from S-adenosylmethionine. Has broad substrate specificity with 6-aminopurine nucleosides as preferred substrates. This chain is S-methyl-5'-thioadenosine phosphorylase, found in Saccharolobus solfataricus (strain ATCC 35092 / DSM 1617 / JCM 11322 / P2) (Sulfolobus solfataricus).